The sequence spans 594 residues: Sodium-dependent glucose transporter 1 (594 aa).

The next 11 helical transmembrane spans lie at 77-97 (WLVS…ISVL), 115-137 (LSYI…GILF), 144-161 (LLLG…SGTP), 166-186 (AWVL…LDTG), 205-225 (ALHF…KLLF), 269-289 (IVIG…YFCI), 311-331 (TLII…VAYG), 349-371 (AAGL…IFFA), 393-413 (LLCL…LYGI), 439-459 (IFVV…GFLL), and 467-487 (LLMY…PVLY).

The protein belongs to the major facilitator superfamily.

It is found in the apical cell membrane. Functionally, may function as a sodium-dependent glucose transporter. Potential channels for urea in the inner medulla of kidney. The chain is Sodium-dependent glucose transporter 1 (mfsd4b) from Danio rerio (Zebrafish).